Here is a 405-residue protein sequence, read N- to C-terminus: Tyrosine--tRNA ligase (405 aa).

The 'HIGH' region signature appears at Pro48–His57. The 'KMSKS' region signature appears at Lys232 to Ser236. Residue Lys235 coordinates ATP. The 62-residue stretch at Ile343–Phe404 folds into the S4 RNA-binding domain.

It belongs to the class-I aminoacyl-tRNA synthetase family. TyrS type 2 subfamily. Homodimer.

Its subcellular location is the cytoplasm. The enzyme catalyses tRNA(Tyr) + L-tyrosine + ATP = L-tyrosyl-tRNA(Tyr) + AMP + diphosphate + H(+). In terms of biological role, catalyzes the attachment of tyrosine to tRNA(Tyr) in a two-step reaction: tyrosine is first activated by ATP to form Tyr-AMP and then transferred to the acceptor end of tRNA(Tyr). This is Tyrosine--tRNA ligase from Desulfotalea psychrophila (strain LSv54 / DSM 12343).